Consider the following 571-residue polypeptide: MRTSHYLLSTLKETPADAEIVSHQLMLRAGMIRKLASGLYDWMPTGVRVLRKIEKIVREEMDNAGSLEISMPVVQPADLWQESGRWEQYGPELLRFTDRGERPFVLGPTHEEVVTDIVRNEITSYKQLPLNLYQIQTKFRDEVRPRFGVMRSREFIMKDAYSFHISQESLQETYDRMYQAYSNIFTRIGLDFRPVLADTGSIGGSASHEFQVLADSGEDDIVFSTASDYAANIELAEAVMPATPRSPATEELRLVDTPNAKTIAELVEQFNLPIEKTVKTLIVHATEESGHKLVALLVRGDHELNEIKAEKCSIVASPLVFATEEEIRQAVNAGPGSLGPINLPLPIIIDRAVSVMSDFGAGANIDGKHYFGINWERDLPLAEMADIRNVVEGDPSPDGKGTLLIKRGIEVGHIFQLGKKYSEALKATVQNEEGHNQVVTMGCYGIGITRIVAAAIEQNHDARGIIWPDAIAPFQVAILPMNMHRSYRVKEVAEKLYADLRAQGIDVLFDDRKERPGVMFADMELIGVPHTIVIGDRNLDNEQVEYKARRSDDKSLVNVNDVVAFIKEQLV.

The protein belongs to the class-II aminoacyl-tRNA synthetase family. ProS type 1 subfamily. As to quaternary structure, homodimer.

Its subcellular location is the cytoplasm. The catalysed reaction is tRNA(Pro) + L-proline + ATP = L-prolyl-tRNA(Pro) + AMP + diphosphate. Its function is as follows. Catalyzes the attachment of proline to tRNA(Pro) in a two-step reaction: proline is first activated by ATP to form Pro-AMP and then transferred to the acceptor end of tRNA(Pro). As ProRS can inadvertently accommodate and process non-cognate amino acids such as alanine and cysteine, to avoid such errors it has two additional distinct editing activities against alanine. One activity is designated as 'pretransfer' editing and involves the tRNA(Pro)-independent hydrolysis of activated Ala-AMP. The other activity is designated 'posttransfer' editing and involves deacylation of mischarged Ala-tRNA(Pro). The misacylated Cys-tRNA(Pro) is not edited by ProRS. The sequence is that of Proline--tRNA ligase from Proteus mirabilis (strain HI4320).